Here is a 581-residue protein sequence, read N- to C-terminus: Probable peptidoglycan D,D-transpeptidase PenA (581 aa).

The chain crosses the membrane as a helical span at residues isoleucine 28–tyrosine 48. Serine 310 (acyl-ester intermediate) is an active-site residue.

Belongs to the transpeptidase family. FtsI subfamily.

The protein localises to the cell inner membrane. The enzyme catalyses Preferential cleavage: (Ac)2-L-Lys-D-Ala-|-D-Ala. Also transpeptidation of peptidyl-alanyl moieties that are N-acyl substituents of D-alanine.. It participates in cell wall biogenesis; peptidoglycan biosynthesis. Catalyzes cross-linking of the peptidoglycan cell wall at the division septum. The chain is Probable peptidoglycan D,D-transpeptidase PenA from Neisseria meningitidis serogroup A / serotype 4A (strain DSM 15465 / Z2491).